Reading from the N-terminus, the 356-residue chain is MSSTRPFCFVCGKEKSVGVFQLIEGCIVPGTFKPIKDILKYFEKIINQRLELLPNSAACRDCLEYLFNYDRLVRNLSQVQRQIADALLGCRQVEGKAETKQQAAKRARVQVPAFKIVQATALKEPERQPGEEDECEEFMKEEMLDEEFQFSEPDDSMPSSEEEFFTETTEIPCHICGEMFSSQEVLERHIKADTCQKSEQATCNVCGLKVKDDEVLDLHMNLHEGKTELECRYCDKKFSHKRNVLRHMEVHWDKKKYQCDKCGERFSLSWLMYNHLMRHDAEENALICEVCHQQFKTKRTYKHHLRTHQTDRPRYPCPDCEKSFVDKYTLKVHKRVHQPVEKPESAEAKEATVTFF.

Residues 171 to 193 (IPCHICGEMFSSQEVLERHIKAD) form a C2H2-type 1; degenerate zinc finger. C2H2-type zinc fingers lie at residues 201–223 (ATCN…MNLH), 229–251 (LECR…MEVH), 257–279 (YQCD…LMRH), 286–308 (LICE…LRTH), and 315–337 (YPCP…KRVH).

Binds chromatin; requires N-terminal regions to form protein-protein contacts, in addition to DNA specific recognition by the zinc fingers.

It is found in the nucleus. Its function is as follows. Binds to the consensus DNA sequence 5'-YCAGAGATGCGCA-3'. The protein is Serendipity locus protein beta (Sry-beta) of Drosophila melanogaster (Fruit fly).